Reading from the N-terminus, the 209-residue chain is Thymidylate kinase (209 aa).

Position 10–17 (10–17 (GLDGAGKS)) interacts with ATP.

It belongs to the thymidylate kinase family.

It carries out the reaction dTMP + ATP = dTDP + ADP. Phosphorylation of dTMP to form dTDP in both de novo and salvage pathways of dTTP synthesis. This chain is Thymidylate kinase, found in Francisella tularensis subsp. holarctica (strain FTNF002-00 / FTA).